Reading from the N-terminus, the 569-residue chain is Protein misato homolog 1 (569 aa).

Phosphoserine is present on residues S41 and S495.

This sequence belongs to the misato family.

The protein resides in the mitochondrion outer membrane. It is found in the cytoplasm. Involved in the regulation of mitochondrial distribution and morphology. Required for mitochondrial fusion and mitochondrial network formation. The polypeptide is Protein misato homolog 1 (MSTO1) (Macaca fascicularis (Crab-eating macaque)).